A 331-amino-acid polypeptide reads, in one-letter code: Phosphoribosylformylglycinamidine cyclo-ligase (331 aa).

This sequence belongs to the AIR synthase family.

The protein localises to the cytoplasm. The enzyme catalyses 2-formamido-N(1)-(5-O-phospho-beta-D-ribosyl)acetamidine + ATP = 5-amino-1-(5-phospho-beta-D-ribosyl)imidazole + ADP + phosphate + H(+). Its pathway is purine metabolism; IMP biosynthesis via de novo pathway; 5-amino-1-(5-phospho-D-ribosyl)imidazole from N(2)-formyl-N(1)-(5-phospho-D-ribosyl)glycinamide: step 2/2. The protein is Phosphoribosylformylglycinamidine cyclo-ligase of Clostridium kluyveri (strain NBRC 12016).